Consider the following 199-residue polypeptide: MKSLETMARYKKELTECARNLKLPFLAEHLDEILHEAQEKQQTYSEFLSTCLMRELRDKERRSYLTRLKFAGLPARYDLDLYDFSRTEGIDQRQMRELRELVWIRRTYNLLLVGDSGTGKTFIASGLIHEAVKAGYKAYLLTLEELFVCLKTKEISRPAMKTYKRIMKAQLLAIDDVTLFPLKGEDVLLLFKLVNCVQG.

114 to 121 contacts ATP; that stretch reads GDSGTGKT.

It belongs to the IS21/IS1162 putative ATP-binding protein family.

The chain is Insertion sequence IS21-like putative ATP-binding protein (tnpB) from Bacteroides fragilis (strain YCH46).